The sequence spans 305 residues: Ribonuclease BN (305 aa).

Residues histidine 64, histidine 66, aspartate 68, histidine 69, histidine 141, aspartate 212, and histidine 270 each contribute to the Zn(2+) site. Catalysis depends on aspartate 68, which acts as the Proton acceptor.

The protein belongs to the RNase Z family. RNase BN subfamily. As to quaternary structure, homodimer. The cofactor is Zn(2+).

In terms of biological role, zinc phosphodiesterase, which has both exoribonuclease and endoribonuclease activities. The polypeptide is Ribonuclease BN (Salmonella gallinarum (strain 287/91 / NCTC 13346)).